The primary structure comprises 208 residues: V-type proton ATPase subunit E (208 aa).

This sequence belongs to the V-ATPase E subunit family.

Its function is as follows. Produces ATP from ADP in the presence of a proton gradient across the membrane. In Chlamydia trachomatis serovar L2 (strain ATCC VR-902B / DSM 19102 / 434/Bu), this protein is V-type proton ATPase subunit E.